A 476-amino-acid polypeptide reads, in one-letter code: NADH-quinone oxidoreductase subunit N (476 aa).

14 helical membrane-spanning segments follow: residues 10-30 (AVLP…IGAI), 42-62 (LAIA…AVTI), 77-97 (FMKV…VDWL), 108-128 (AVLV…GDLI), 129-149 (ALYL…AINR), 162-182 (FVLG…IYGF), 202-222 (LVFG…AVPF), 234-254 (PTPV…AVFV), 268-288 (WQQI…FAAI), 296-316 (LLAY…AAGT), 323-343 (VLLY…CVLA), 368-388 (ALAL…AGFV), 392-412 (YVFL…GVVA), and 445-465 (AVLA…TPLI).

It belongs to the complex I subunit 2 family. NDH-1 is composed of 14 different subunits. Subunits NuoA, H, J, K, L, M, N constitute the membrane sector of the complex.

It localises to the cell inner membrane. It catalyses the reaction a quinone + NADH + 5 H(+)(in) = a quinol + NAD(+) + 4 H(+)(out). Functionally, NDH-1 shuttles electrons from NADH, via FMN and iron-sulfur (Fe-S) centers, to quinones in the respiratory chain. The immediate electron acceptor for the enzyme in this species is believed to be ubiquinone. Couples the redox reaction to proton translocation (for every two electrons transferred, four hydrogen ions are translocated across the cytoplasmic membrane), and thus conserves the redox energy in a proton gradient. The chain is NADH-quinone oxidoreductase subunit N from Azorhizobium caulinodans (strain ATCC 43989 / DSM 5975 / JCM 20966 / LMG 6465 / NBRC 14845 / NCIMB 13405 / ORS 571).